A 336-amino-acid polypeptide reads, in one-letter code: GTP 3',8-cyclase (336 aa).

The 222-residue stretch at 17–238 (GFSRRFHYLR…WTQQNRNLTD (222 aa)) folds into the Radical SAM core domain. Arginine 26 contacts GTP. Positions 33 and 37 each coordinate [4Fe-4S] cluster. Tyrosine 39 contacts S-adenosyl-L-methionine. Residue cysteine 40 participates in [4Fe-4S] cluster binding. Arginine 75 serves as a coordination point for GTP. Glycine 79 lines the S-adenosyl-L-methionine pocket. A GTP-binding site is contributed by threonine 106. Residue serine 130 participates in S-adenosyl-L-methionine binding. Lysine 167 is a binding site for GTP. An S-adenosyl-L-methionine-binding site is contributed by methionine 201. Residues cysteine 264 and cysteine 267 each coordinate [4Fe-4S] cluster. 269–271 (RLR) is a binding site for GTP. Position 281 (cysteine 281) interacts with [4Fe-4S] cluster.

The protein belongs to the radical SAM superfamily. MoaA family. As to quaternary structure, monomer and homodimer. [4Fe-4S] cluster is required as a cofactor.

The enzyme catalyses GTP + AH2 + S-adenosyl-L-methionine = (8S)-3',8-cyclo-7,8-dihydroguanosine 5'-triphosphate + 5'-deoxyadenosine + L-methionine + A + H(+). The protein operates within cofactor biosynthesis; molybdopterin biosynthesis. Its function is as follows. Catalyzes the cyclization of GTP to (8S)-3',8-cyclo-7,8-dihydroguanosine 5'-triphosphate. This chain is GTP 3',8-cyclase, found in Tolumonas auensis (strain DSM 9187 / NBRC 110442 / TA 4).